A 151-amino-acid polypeptide reads, in one-letter code: RNA polymerase-binding transcription factor DksA (151 aa).

The Zn(2+) site is built by C114, C117, C135, and C138. Residues 114–138 form a dksA C4-type zinc finger; it reads CNSCAVEIGIRRLEARPTANLCIDC.

It belongs to the DksA family. Interacts directly with the RNA polymerase.

The protein resides in the cytoplasm. In terms of biological role, transcription factor that acts by binding directly to the RNA polymerase (RNAP). Required for negative regulation of rRNA expression and positive regulation of several amino acid biosynthesis promoters. Also required for regulation of fis expression. The protein is RNA polymerase-binding transcription factor DksA of Buchnera aphidicola subsp. Schizaphis graminum (strain Sg).